A 129-amino-acid polypeptide reads, in one-letter code: Putative transmembrane protein 10 (129 aa).

Helical transmembrane passes span 3-23, 27-47, and 85-105; these read NFSY…AFAG, LLVG…LSSL, and SSVL…FFVF.

It localises to the host membrane. This Sulfolobus islandicus filamentous virus (isolate Iceland/Hveragerdi) (SIFV) protein is Putative transmembrane protein 10 (SIFV0010).